Reading from the N-terminus, the 507-residue chain is AMP phosphorylase (507 aa).

AMP contacts are provided by residues Gly168, 194-199 (SRAITG), and Thr203. Catalysis depends on Asp256, which acts as the Proton donor. 2 residues coordinate AMP: Ser264 and Lys288.

Belongs to the thymidine/pyrimidine-nucleoside phosphorylase family. Type 2 subfamily.

The catalysed reaction is AMP + phosphate = alpha-D-ribose 1,5-bisphosphate + adenine. It carries out the reaction CMP + phosphate = cytosine + alpha-D-ribose 1,5-bisphosphate. The enzyme catalyses UMP + phosphate = alpha-D-ribose 1,5-bisphosphate + uracil. Its function is as follows. Catalyzes the conversion of AMP and phosphate to adenine and ribose 1,5-bisphosphate (R15P). Exhibits phosphorylase activity toward CMP and UMP in addition to AMP. Functions in an archaeal AMP degradation pathway, together with R15P isomerase and RubisCO. The protein is AMP phosphorylase of Methanosarcina mazei (strain ATCC BAA-159 / DSM 3647 / Goe1 / Go1 / JCM 11833 / OCM 88) (Methanosarcina frisia).